The following is a 207-amino-acid chain: Large ribosomal subunit protein uL4 (207 aa).

The interval 45-80 (RQGTHAVKNRSEVRGGGRKPWRQKGTGRARQGSTRS) is disordered. The span at 60–71 (GGRKPWRQKGTG) shows a compositional bias: basic residues.

The protein belongs to the universal ribosomal protein uL4 family. In terms of assembly, part of the 50S ribosomal subunit.

Its function is as follows. One of the primary rRNA binding proteins, this protein initially binds near the 5'-end of the 23S rRNA. It is important during the early stages of 50S assembly. It makes multiple contacts with different domains of the 23S rRNA in the assembled 50S subunit and ribosome. Functionally, forms part of the polypeptide exit tunnel. In Oceanobacillus iheyensis (strain DSM 14371 / CIP 107618 / JCM 11309 / KCTC 3954 / HTE831), this protein is Large ribosomal subunit protein uL4.